We begin with the raw amino-acid sequence, 128 residues long: UPF0102 protein PSPTO_4420 (128 aa).

This sequence belongs to the UPF0102 family.

This Pseudomonas syringae pv. tomato (strain ATCC BAA-871 / DC3000) protein is UPF0102 protein PSPTO_4420.